The following is a 297-amino-acid chain: N-acetylmuramic acid 6-phosphate etherase (297 aa).

One can recognise an SIS domain in the interval 56 to 219 (AIEAFNKGGR…STISMIGIGK (164 aa)). The Proton donor role is filled by Glu-84. Residue Glu-115 is part of the active site.

This sequence belongs to the GCKR-like family. MurNAc-6-P etherase subfamily. In terms of assembly, homodimer.

It catalyses the reaction N-acetyl-D-muramate 6-phosphate + H2O = N-acetyl-D-glucosamine 6-phosphate + (R)-lactate. It functions in the pathway amino-sugar metabolism; N-acetylmuramate degradation. Functionally, specifically catalyzes the cleavage of the D-lactyl ether substituent of MurNAc 6-phosphate, producing GlcNAc 6-phosphate and D-lactate. The chain is N-acetylmuramic acid 6-phosphate etherase from Lactococcus lactis subsp. cremoris (strain SK11).